We begin with the raw amino-acid sequence, 105 residues long: Nucleoid-associated protein MXAN_1931 (105 aa).

This sequence belongs to the YbaB/EbfC family. Homodimer.

The protein resides in the cytoplasm. It is found in the nucleoid. Binds to DNA and alters its conformation. May be involved in regulation of gene expression, nucleoid organization and DNA protection. In Myxococcus xanthus (strain DK1622), this protein is Nucleoid-associated protein MXAN_1931.